Consider the following 346-residue polypeptide: Secreted frizzled-related protein 4 (346 aa).

An N-terminal signal peptide occupies residues 1 to 18 (MFLSILVALCLWLHLALG). The FZ domain occupies 19–139 (VRGAPCEAVR…VYDRGVCISP (121 aa)). Disulfide bonds link Cys-24–Cys-85, Cys-32–Cys-78, Cys-69–Cys-108, Cys-97–Cys-136, and Cys-101–Cys-125. Residues Asn-38 and Asn-68 are each glycosylated (N-linked (GlcNAc...) asparagine). Asn-116, Asn-194, and Asn-240 each carry an N-linked (GlcNAc...) asparagine glycan. In terms of domain architecture, NTR spans 178–307 (CKCKKVKPTL…IQDKKKTAGR (130 aa)). Positions 294–303 (QRRTIQDKKK) are enriched in basic and acidic residues. Residues 294–346 (QRRTIQDKKKTAGRTSRSNPPKPKGKPPAPKPASPKKNIKTRSAQKKTNPKKV) are disordered. A compositionally biased stretch (pro residues) spans 313 to 326 (PPKPKGKPPAPKPA). The span at 330–346 (KNIKTRSAQKKTNPKKV) shows a compositional bias: basic residues.

This sequence belongs to the secreted frizzled-related protein (sFRP) family.

It localises to the secreted. Functionally, soluble frizzled-related proteins (sFRPS) function as modulators of Wnt signaling through direct interaction with Wnts. They have a role in regulating cell growth and differentiation in specific cell types. SFRP4 plays a role in bone morphogenesis. May also act as a regulator of adult uterine morphology and function. May also increase apoptosis during ovulation possibly through modulation of FZ1/FZ4/WNT4 signaling. Has phosphaturic effects by specifically inhibiting sodium-dependent phosphate uptake. This Macaca mulatta (Rhesus macaque) protein is Secreted frizzled-related protein 4 (SFRP4).